The following is a 96-amino-acid chain: Cobalt transport protein CbiN (96 aa).

2 consecutive transmembrane segments (helical) span residues 4 to 24 and 59 to 79; these read WLAAGGILLGALVVFSFVSAG and IESLLFSIQAAVGGIIIGYYL.

The protein belongs to the CbiN family. In terms of assembly, forms an energy-coupling factor (ECF) transporter complex composed of an ATP-binding protein (A component, CbiO), a transmembrane protein (T component, CbiQ) and 2 possible substrate-capture proteins (S components, CbiM and CbiN) of unknown stoichimetry.

It is found in the cell membrane. It functions in the pathway cofactor biosynthesis; adenosylcobalamin biosynthesis. Its function is as follows. Part of the energy-coupling factor (ECF) transporter complex CbiMNOQ involved in cobalt import. This chain is Cobalt transport protein CbiN, found in Halobacterium salinarum (strain ATCC 29341 / DSM 671 / R1).